A 796-amino-acid chain; its full sequence is MVCCLWVLLALLLHLDHVACEDDAYSFTSKELKAYKQEVKELFYFGFDNYLEHGYPYDEVKPISCVPKKRNFEDPTDQGTNDILGNFTITLIDSLTTIAILEDRPQFLKAVRLVERTFPDGNFDIDSTIQVFEITIRVIGSLLSSHLYATDPTKAVYLGDDYDGSLLRLAQNMADRLLPAYLTSTGLPMPRRNIKRKWDVSEFPEFLETENNVAAMASPMFEFTILSYLTGDPKYEKVTRYAFDKTWSLRTGLDLLPMSFHPEKLTPYTPMTGIGASIDSLFEYALKGAILFDDSELMEVWNVAYEALKTNCKNDWFFANVMADTGHLFVPWIDSLSAFFSGLQVLAGDLDDAIANHLMFLKMWNTFGGIPERWNFSPPEFPPLSPLERSGAVALDNILPLEWYPLRPEFFESTYFLYRATKDPFYLNIGVHLLKDLKQRFKSNCGFAGFQNVITGELQDRMETFVLSETLKYLYLLFDEENELHNSASDVIFSTEAHPMWLPQEVRSNYKRNAKFNNSVYSSHLEICQKKDREQAGENTLSQRIVGFAKSIFHKGPPDEEATDPIIDYTIDTELPGTCSIKPHHVIGDEFWYSPMLSNFDRLFEIDSRFAATLIKPSHMHNYNAIELEPGFYNRWSNPQFSTCLIPPTTEIFELLFDLPGYHQLNPLMLENKTITFETFGGRSRLKIEKLQIYQIDYYGDLITASTFQDVSRKDIFSNACDAVASLYSPTYLYRVVAINGRILPRHGSVQIKKHSPVLTSNGTREEDEFKMDGIGINDHSQLMLECTPIINLFIV.

An N-terminal signal peptide occupies residues 1-20 (MVCCLWVLLALLLHLDHVAC). N-linked (GlcNAc...) asparagine glycosylation is present at asparagine 86. Glutamate 372 serves as the catalytic Proton donor. Threonine 495 serves as a coordination point for Ca(2+). Asparagine 517, asparagine 672, and asparagine 762 each carry an N-linked (GlcNAc...) asparagine glycan.

Belongs to the glycosyl hydrolase 47 family. Interacts with PDI1. Ca(2+) serves as cofactor.

The protein resides in the endoplasmic reticulum lumen. The catalysed reaction is Hydrolysis of terminal, non-reducing alpha-D-mannose residues in alpha-D-mannosides.. It participates in protein modification; protein glycosylation. Functionally, alpha-1,2-specific exomannosidase involved in endoplasmic reticulum-associated degradation (ERAD). Delivers misfolded glycoproteins to proteasomes. Forms a complex with PDI1 to process unfolded protein-bound Man8GlcNAc2 oligosaccharides to Man7GlcNAc2, promoting degradation in unfolded protein response. The protein is ER degradation-enhancing alpha-mannosidase-like protein 1 (MNL1) of Saccharomyces cerevisiae (strain ATCC 204508 / S288c) (Baker's yeast).